We begin with the raw amino-acid sequence, 153 residues long: uncharacterized protein (153 aa).

This is an uncharacterized protein from Saccharomyces cerevisiae (strain ATCC 204508 / S288c) (Baker's yeast).